The following is a 65-amino-acid chain: UPF0337 protein gbs1203 (65 aa).

Basic and acidic residues predominate over residues 1 to 12 (MSEEKFDAKVDK). Residues 1-29 (MSEEKFDAKVDKVSGSVKESVGKLTGDKE) form a disordered region.

This sequence belongs to the UPF0337 (CsbD) family.

The protein is UPF0337 protein gbs1203 of Streptococcus agalactiae serotype III (strain NEM316).